We begin with the raw amino-acid sequence, 125 residues long: Ribonuclease P protein component (125 aa).

The protein belongs to the RnpA family. As to quaternary structure, consists of a catalytic RNA component (M1 or rnpB) and a protein subunit.

It carries out the reaction Endonucleolytic cleavage of RNA, removing 5'-extranucleotides from tRNA precursor.. In terms of biological role, RNaseP catalyzes the removal of the 5'-leader sequence from pre-tRNA to produce the mature 5'-terminus. It can also cleave other RNA substrates such as 4.5S RNA. The protein component plays an auxiliary but essential role in vivo by binding to the 5'-leader sequence and broadening the substrate specificity of the ribozyme. In Clostridium perfringens (strain ATCC 13124 / DSM 756 / JCM 1290 / NCIMB 6125 / NCTC 8237 / Type A), this protein is Ribonuclease P protein component.